Consider the following 101-residue polypeptide: Small ribosomal subunit protein uS14 (101 aa).

This sequence belongs to the universal ribosomal protein uS14 family. In terms of assembly, part of the 30S ribosomal subunit. Contacts proteins S3 and S10.

Functionally, binds 16S rRNA, required for the assembly of 30S particles and may also be responsible for determining the conformation of the 16S rRNA at the A site. The sequence is that of Small ribosomal subunit protein uS14 from Histophilus somni (strain 2336) (Haemophilus somnus).